Consider the following 292-residue polypeptide: Bifunctional protein FolD (292 aa).

NADP(+) is bound by residues 165-167, Ser190, and Thr231; that span reads GRS.

Belongs to the tetrahydrofolate dehydrogenase/cyclohydrolase family. In terms of assembly, homodimer.

It catalyses the reaction (6R)-5,10-methylene-5,6,7,8-tetrahydrofolate + NADP(+) = (6R)-5,10-methenyltetrahydrofolate + NADPH. It carries out the reaction (6R)-5,10-methenyltetrahydrofolate + H2O = (6R)-10-formyltetrahydrofolate + H(+). It participates in one-carbon metabolism; tetrahydrofolate interconversion. Its function is as follows. Catalyzes the oxidation of 5,10-methylenetetrahydrofolate to 5,10-methenyltetrahydrofolate and then the hydrolysis of 5,10-methenyltetrahydrofolate to 10-formyltetrahydrofolate. The protein is Bifunctional protein FolD of Arthrobacter globiformis.